Here is a 452-residue protein sequence, read N- to C-terminus: DNA primase DnaG (452 aa).

The Toprim domain maps to 172–248; it reads DTVIIVEGRA…DIDYIARAPP (77 aa). The Mg(2+) site is built by E178, D222, and D224. The segment at 289–320 is disordered; it reads KKQIEQAQVQPSAAPTSPQPQPESTQPTQPIQ. Positions 294–320 are enriched in low complexity; the sequence is QAQVQPSAAPTSPQPQPESTQPTQPIQ.

It belongs to the archaeal DnaG primase family. In terms of assembly, forms a ternary complex with MCM helicase and DNA. Component of the archaeal exosome complex. It depends on Mg(2+) as a cofactor.

The catalysed reaction is ssDNA + n NTP = ssDNA/pppN(pN)n-1 hybrid + (n-1) diphosphate.. RNA polymerase that catalyzes the synthesis of short RNA molecules used as primers for DNA polymerase during DNA replication. Also part of the exosome, which is a complex involved in RNA degradation. Acts as a poly(A)-binding protein that enhances the interaction between heteromeric, adenine-rich transcripts and the exosome. The protein is DNA primase DnaG of Caldivirga maquilingensis (strain ATCC 700844 / DSM 13496 / JCM 10307 / IC-167).